A 337-amino-acid polypeptide reads, in one-letter code: Viral cathepsin (337 aa).

The N-terminal stretch at 1 to 16 is a signal peptide; the sequence is MNKILILLLLVSAVLT. A propeptide spans 17–126 (activation peptide); the sequence is SHDQVVAVTI…VVDGPGQRQR (110 aa). 3 cysteine pairs are disulfide-bonded: cysteine 147/cysteine 188, cysteine 181/cysteine 221, and cysteine 276/cysteine 324. Residue cysteine 150 is part of the active site. Catalysis depends on residues histidine 283 and asparagine 303.

The protein belongs to the peptidase C1 family. Synthesized as an inactive proenzyme and activated by proteolytic removal of the inhibitory propeptide.

The enzyme catalyses Endopeptidase of broad specificity, hydrolyzing substrates of both cathepsin L and cathepsin B.. In terms of biological role, cysteine protease that plays an essential role in host liquefaction to facilitate horizontal transmission of the virus. May participate in the degradation of foreign protein expressed by the baculovirus system. This is Viral cathepsin (VCATH) from Mamestra configurata (bertha armyworm).